We begin with the raw amino-acid sequence, 433 residues long: Serine hydroxymethyltransferase (433 aa).

(6S)-5,6,7,8-tetrahydrofolate contacts are provided by residues leucine 132 and 136 to 138; that span reads GHL. At lysine 241 the chain carries N6-(pyridoxal phosphate)lysine.

This sequence belongs to the SHMT family. In terms of assembly, homodimer. The cofactor is pyridoxal 5'-phosphate.

It localises to the cytoplasm. The catalysed reaction is (6R)-5,10-methylene-5,6,7,8-tetrahydrofolate + glycine + H2O = (6S)-5,6,7,8-tetrahydrofolate + L-serine. It participates in one-carbon metabolism; tetrahydrofolate interconversion. The protein operates within amino-acid biosynthesis; glycine biosynthesis; glycine from L-serine: step 1/1. In terms of biological role, catalyzes the reversible interconversion of serine and glycine with tetrahydrofolate (THF) serving as the one-carbon carrier. This reaction serves as the major source of one-carbon groups required for the biosynthesis of purines, thymidylate, methionine, and other important biomolecules. Also exhibits THF-independent aldolase activity toward beta-hydroxyamino acids, producing glycine and aldehydes, via a retro-aldol mechanism. The chain is Serine hydroxymethyltransferase from Afipia carboxidovorans (strain ATCC 49405 / DSM 1227 / KCTC 32145 / OM5) (Oligotropha carboxidovorans).